A 409-amino-acid chain; its full sequence is Iron(III) salmochelin esterase (409 aa).

This sequence belongs to the Fes family.

It is found in the cytoplasm. The enzyme catalyses Fe(III)-C-5-deoxy-beta-D-glucosyl-enterobactin + H2O = Fe(III)-{di[N-(2,3-dihydroxybenzoyl)-L-seryl]-N-(C-5-[deoxy-beta-D-glucosyl]-2,3-dihydroxybenzoyl)-L-serine} + H(+). It carries out the reaction Fe(III)-{di[N-(2,3-dihydroxybenzoyl)-L-seryl]-N-(C-5-[deoxy-beta-D-glucosyl]-2,3-dihydroxybenzoyl)-L-serine} + H2O + H(+) = Fe(III)-{N-(2,3-dihydroxybenzoyl)-L-seryl-N-(C-5-[deoxy-beta-D-glucosyl]-2,3-dihydroxybenzoyl)-L-serine} + N-(2,3-dihydroxybenzoyl)-L-serine. It catalyses the reaction Fe(III)-{N-(2,3-dihydroxybenzoyl)-L-seryl-[N-(C-5-[deoxy-beta-D-glucosyl]-2,3-dihydroxybenzoyl)-L-serine]2} + H2O + H(+) = Fe(III)-{N-(2,3-dihydroxybenzoyl)-L-seryl-N-(C-5-[deoxy-beta-D-glucosyl]-2,3-dihydroxybenzoyl)-L-serine} + N-(C-5-[deoxy-beta-D-glucosyl]-2,3-dihydroxybenzoyl)-L-serine. The catalysed reaction is Fe(III)-di(C-5-deoxy-beta-D-glucosyl)-enterobactin + H2O = Fe(III)-{N-(2,3-dihydroxybenzoyl)-L-seryl-[N-(C-5-[deoxy-beta-D-glucosyl]-2,3-dihydroxybenzoyl)-L-serine]2} + H(+). The enzyme catalyses Fe(III)-{N-(2,3-dihydroxybenzoyl)-L-seryl-[N-(C-5-[deoxy-beta-D-glucosyl]-2,3-dihydroxybenzoyl)-L-serine]2} + H2O + H(+) = Fe(III)-[N-(C-5-[deoxy-beta-D-glucosyl]-2,3-dihydroxybenzoyl)-L-serine]2 + N-(2,3-dihydroxybenzoyl)-L-serine. It carries out the reaction Fe(III)-[N-(C-5-[deoxy-beta-D-glucosyl]-2,3-dihydroxybenzoyl)-L-serine]2 + H2O + H(+) = Fe(III)-[N-(C-5-[deoxy-beta-D-glucosyl]-2,3-dihydroxybenzoyl)-L-serine] + N-(C-5-[deoxy-beta-D-glucosyl]-2,3-dihydroxybenzoyl)-L-serine. Catalyzes the hydrolysis of both the apo and Fe3(+)-bound forms of enterobactin (Ent), monoglucosyl-C-Ent (MGE), diglucosyl-C-Ent (DGE) and triglucosyl-C-Ent (TGE). Shows higher catalytic efficiencies on Fe3(+)-bound forms. The initial linear trimer products are, in turn, very good substrates for further hydrolytic cleavage by IroD, leading to complete degradation of the trilactone to DHB-Ser and/or Glc-DHB-Ser monomers. Hydrolyzes MGE and DGE regioselectively. May be the ferric MGE/DGE esterase responsible for cytoplasmic iron release. This Escherichia coli O6:H1 (strain CFT073 / ATCC 700928 / UPEC) protein is Iron(III) salmochelin esterase.